Here is a 606-residue protein sequence, read N- to C-terminus: Large subunit GTPase 1 homolog (606 aa).

The disordered stretch occupies residues Met-1 to Phe-21. The CP-type G domain maps to Trp-165–Pro-395. Asn-213 to Asp-216 contacts GTP. Residues Ser-276 and Ser-279 each carry the phosphoserine modification. Residues Gly-344–Ser-351 and Asp-388–Gly-391 contribute to the GTP site. Positions Leu-574–His-606 are disordered. Positions Pro-584–Phe-600 are enriched in basic residues.

This sequence belongs to the TRAFAC class YlqF/YawG GTPase family. LSG1 subfamily. As to expression, expressed in larval serotonergic neurons.

Its subcellular location is the cytoplasm. Its function is as follows. GTPase required for the nuclear export of the 60S ribosomal subunit. Probably acts by mediating the release of Nmd3 from the 60S ribosomal subunit after export into the cytoplasm. Regulator of body size; acts in serotonergic neurons to regulate insulin signaling and thus exerts global growth control. The protein is Large subunit GTPase 1 homolog (Ns3) of Drosophila melanogaster (Fruit fly).